Reading from the N-terminus, the 314-residue chain is Transcriptional activator RhrA (314 aa).

In terms of domain architecture, HTH araC/xylS-type spans 210-310 (ASIKMRVEQN…GVRPSDLRRL (101 aa)). DNA-binding regions (H-T-H motif) lie at residues 228–249 (TDVAEAERITPRAIQKFFSREG) and 277–300 (ISQIAYNVGFNDLSYFNRTFRSRY).

Its function is as follows. Transcriptional activator of the rhizobactin regulon. This is Transcriptional activator RhrA (rhrA) from Rhizobium meliloti (strain 1021) (Ensifer meliloti).